The following is a 346-amino-acid chain: Anthranilate phosphoribosyltransferase (346 aa).

5-phospho-alpha-D-ribose 1-diphosphate contacts are provided by residues glycine 80, 83–84 (GD), threonine 88, 90–93 (NIST), 108–116 (KHGNTAVSS), and serine 120. Glycine 80 is an anthranilate binding site. Serine 92 provides a ligand contact to Mg(2+). Asparagine 111 is an anthranilate binding site. Arginine 166 contributes to the anthranilate binding site. Positions 225 and 226 each coordinate Mg(2+).

It belongs to the anthranilate phosphoribosyltransferase family. Homodimer. Mg(2+) serves as cofactor.

The catalysed reaction is N-(5-phospho-beta-D-ribosyl)anthranilate + diphosphate = 5-phospho-alpha-D-ribose 1-diphosphate + anthranilate. Its pathway is amino-acid biosynthesis; L-tryptophan biosynthesis; L-tryptophan from chorismate: step 2/5. Catalyzes the transfer of the phosphoribosyl group of 5-phosphorylribose-1-pyrophosphate (PRPP) to anthranilate to yield N-(5'-phosphoribosyl)-anthranilate (PRA). The sequence is that of Anthranilate phosphoribosyltransferase from Desulforudis audaxviator (strain MP104C).